A 158-amino-acid polypeptide reads, in one-letter code: NADH-quinone oxidoreductase subunit B 2 (158 aa).

[4Fe-4S] cluster contacts are provided by cysteine 37, cysteine 38, cysteine 102, and cysteine 132.

This sequence belongs to the complex I 20 kDa subunit family. NDH-1 is composed of 14 different subunits. Subunits NuoB, C, D, E, F, and G constitute the peripheral sector of the complex. [4Fe-4S] cluster is required as a cofactor.

The protein localises to the cell inner membrane. The catalysed reaction is a quinone + NADH + 5 H(+)(in) = a quinol + NAD(+) + 4 H(+)(out). Functionally, NDH-1 shuttles electrons from NADH, via FMN and iron-sulfur (Fe-S) centers, to quinones in the respiratory chain. Couples the redox reaction to proton translocation (for every two electrons transferred, four hydrogen ions are translocated across the cytoplasmic membrane), and thus conserves the redox energy in a proton gradient. This chain is NADH-quinone oxidoreductase subunit B 2, found in Nitrosospira multiformis (strain ATCC 25196 / NCIMB 11849 / C 71).